Consider the following 293-residue polypeptide: Ribonuclease HIII (293 aa).

Positions 78–293 (LPLIGTDEVG…TEKAKKRLER (216 aa)) constitute an RNase H type-2 domain. A divalent metal cation-binding residues include Asp-84, Glu-85, and Asp-187.

This sequence belongs to the RNase HII family. RnhC subfamily. Mn(2+) serves as cofactor. Mg(2+) is required as a cofactor.

The protein resides in the cytoplasm. It catalyses the reaction Endonucleolytic cleavage to 5'-phosphomonoester.. Endonuclease that specifically degrades the RNA of RNA-DNA hybrids. The protein is Ribonuclease HIII of Streptococcus pneumoniae serotype 19F (strain G54).